We begin with the raw amino-acid sequence, 105 residues long: MHGPKATLQDIVLHLEPQNEIPVDLLCHEQLSDSEEENDEIDGVNHQHLPARRAEPQRHTMLCMCCKCEARIKLVVESSADDLRAFQQLFLNTLSFVCPWCASQQ.

The segment at 1 to 49 (MHGPKATLQDIVLHLEPQNEIPVDLLCHEQLSDSEEENDEIDGVNHQHL) is E7 terminal domain. Residues 25–29 (LLCHE) carry the LXCXE motif; interaction with host RB1 and TMEM173/STING motif. Residues 65-101 (CCKCEARIKLVVESSADDLRAFQQLFLNTLSFVCPWC) fold into a zinc finger. The Nuclear export signal motif lies at 83–91 (LRAFQQLFL).

The protein belongs to the papillomaviridae E7 protein family. As to quaternary structure, homodimer. Homooligomer. Interacts with host RB1; this interaction induces dissociation of RB1-E2F1 complex thereby disrupting RB1 activity. Interacts with host EP300; this interaction represses EP300 transcriptional activity. Interacts with protein E2; this interaction inhibits E7 oncogenic activity. Interacts with host TMEM173/STING; this interaction impairs the ability of TMEM173/STING to sense cytosolic DNA and promote the production of type I interferon (IFN-alpha and IFN-beta). Post-translationally, highly phosphorylated.

The protein resides in the host cytoplasm. The protein localises to the host nucleus. In terms of biological role, plays a role in viral genome replication by driving entry of quiescent cells into the cell cycle. Stimulation of progression from G1 to S phase allows the virus to efficiently use the cellular DNA replicating machinery to achieve viral genome replication. E7 protein has both transforming and trans-activating activities. Induces the disassembly of the E2F1 transcription factor from RB1, with subsequent transcriptional activation of E2F1-regulated S-phase genes. Interferes with host histone deacetylation mediated by HDAC1 and HDAC2, leading to transcription activation. Also plays a role in the inhibition of both antiviral and antiproliferative functions of host interferon alpha. Interaction with host TMEM173/STING impairs the ability of TMEM173/STING to sense cytosolic DNA and promote the production of type I interferon (IFN-alpha and IFN-beta). This Homo sapiens (Human) protein is Protein E7.